Reading from the N-terminus, the 66-residue chain is Large ribosomal subunit protein bL33c (66 aa).

Belongs to the bacterial ribosomal protein bL33 family.

Its subcellular location is the plastid. It localises to the chloroplast. This Jasminum nudiflorum (Winter jasmine) protein is Large ribosomal subunit protein bL33c.